The primary structure comprises 323 residues: Prostaglandin F synthase 2 (323 aa).

Residues 20 to 24 (GFGTY) and Asp-50 each bind NADP(+). The active-site Proton donor is the Tyr-55. Residue His-117 participates in substrate binding. Residues 166–167 (SN), Gln-190, 216–221 (YAALGA), and 270–280 (KSFNKKRIKEN) each bind NADP(+).

Belongs to the aldo/keto reductase family. In terms of assembly, monomer.

It localises to the cytoplasm. The catalysed reaction is prostaglandin F2alpha + NADP(+) = prostaglandin D2 + NADPH + H(+). Its pathway is lipid metabolism; prostaglandin biosynthesis. Functionally, catalyzes the reduction of PGD(2) and PGH(2) to PGF(2 alpha) and a stereoisomer, respectively. It has a broad substrate specificity and also reduces other carbonyl compounds. This chain is Prostaglandin F synthase 2, found in Bos taurus (Bovine).